The sequence spans 158 residues: Style cell-cycle inhibitor 1-B (158 aa).

Composition is skewed to basic and acidic residues over residues 1 to 11 (MGSDKKTTEEK) and 22 to 47 (PRDE…DKSK). Positions 1-88 (MGSDKKTTEE…DKSKNKFEEL (88 aa)) are disordered. Composition is skewed to basic residues over residues 48–58 (KEKHKSHKSKC) and 67–81 (GEKH…KDKS).

In terms of tissue distribution, specifically expressed in flowers pistils, especially in stigmas and styles. Barely detected in roots, stems, leaves, sepals, petals and stamen.

The protein resides in the nucleus. In terms of biological role, component of the auxin signaling transduction pathway that regulates cell proliferation and differentiation during flowers stigmas and styles development. Involved in the regulation of auxin-related genes. This is Style cell-cycle inhibitor 1-B from Nicotiana tabacum (Common tobacco).